Reading from the N-terminus, the 352-residue chain is Staphylococcal superantigen-like 3 (352 aa).

Positions 1-30 (MKMRTIAKTSLALGLLTTGAITVTTQSVKA) are cleaved as a signal peptide. The interval 61-165 (ATTQAANTRQ…TIKQAQTDMT (105 aa)) is disordered. Over residues 69–104 (RQERTPKLEKAPNTNEEKTSASKIEKISQPKQEEQK) the composition is skewed to basic and acidic residues. The span at 114 to 141 (PKQEQSQTTTESTTPKTKVTTPPSTNTP) shows a compositional bias: low complexity. The span at 142 to 164 (QPMQSTKSDTPQSPTIKQAQTDM) shows a compositional bias: polar residues. The segment at 228–326 (IDVFIVLEDN…VIKMKNGGKY (99 aa)) is sialyl Lewis X-binding.

Belongs to the staphylococcal/streptococcal toxin family. As to quaternary structure, interacts with host TLR2 (via its extracellular domain).

The protein resides in the secreted. Functionally, secreted protein that plays an essential role in immune innate response inhibition by interacting with and inhibiting host TLR2. In turn, bacteria recognition by immune cells is impaired and cytokine production is inhibited. Mechanistically, by interacting with TLR2, blocks ligand binding and thus inhibits activation. Second, by interacting with an already formed TLR2-lipopeptide complex, prevents TLR heterodimerization and downstream signaling. The interaction with host TLR2 does not involve sialyl Lewis X interactions. This is Staphylococcal superantigen-like 3 from Staphylococcus aureus (strain Newman).